A 63-amino-acid polypeptide reads, in one-letter code: MANVCAICGKGVASGIQVSHSHIRTKRTWKPNLQRVHAIVNGTPTRISVCTRCLRSGKVQRAV.

The protein belongs to the bacterial ribosomal protein bL28 family.

This Desulfitobacterium hafniense (strain DSM 10664 / DCB-2) protein is Large ribosomal subunit protein bL28.